We begin with the raw amino-acid sequence, 134 residues long: Phosphoribosyl-AMP cyclohydrolase (134 aa).

Aspartate 80 is a Mg(2+) binding site. Cysteine 81 contacts Zn(2+). The Mg(2+) site is built by aspartate 82 and aspartate 84. Residues cysteine 98 and cysteine 105 each coordinate Zn(2+).

The protein belongs to the PRA-CH family. As to quaternary structure, homodimer. Mg(2+) serves as cofactor. Requires Zn(2+) as cofactor.

Its subcellular location is the cytoplasm. The catalysed reaction is 1-(5-phospho-beta-D-ribosyl)-5'-AMP + H2O = 1-(5-phospho-beta-D-ribosyl)-5-[(5-phospho-beta-D-ribosylamino)methylideneamino]imidazole-4-carboxamide. The protein operates within amino-acid biosynthesis; L-histidine biosynthesis; L-histidine from 5-phospho-alpha-D-ribose 1-diphosphate: step 3/9. Catalyzes the hydrolysis of the adenine ring of phosphoribosyl-AMP. The protein is Phosphoribosyl-AMP cyclohydrolase of Bordetella pertussis (strain Tohama I / ATCC BAA-589 / NCTC 13251).